The chain runs to 146 residues: Holo-[acyl-carrier-protein] synthase (146 aa).

Mg(2+)-binding residues include D9 and E63.

Belongs to the P-Pant transferase superfamily. AcpS family. It depends on Mg(2+) as a cofactor.

It is found in the cytoplasm. It carries out the reaction apo-[ACP] + CoA = holo-[ACP] + adenosine 3',5'-bisphosphate + H(+). Transfers the 4'-phosphopantetheine moiety from coenzyme A to a Ser of acyl-carrier-protein. The protein is Holo-[acyl-carrier-protein] synthase of Burkholderia orbicola (strain MC0-3).